The sequence spans 432 residues: UDP-N-acetylglucosamine 1-carboxyvinyltransferase (432 aa).

Position 22–23 (22–23 (KN)) interacts with phosphoenolpyruvate. Arg-102 serves as a coordination point for UDP-N-acetyl-alpha-D-glucosamine. Residue Cys-126 is the Proton donor of the active site. Cys-126 carries the post-translational modification 2-(S-cysteinyl)pyruvic acid O-phosphothioketal. Residues 131–135 (RPVDL), Asp-317, and Ile-339 contribute to the UDP-N-acetyl-alpha-D-glucosamine site.

It belongs to the EPSP synthase family. MurA subfamily.

Its subcellular location is the cytoplasm. It catalyses the reaction phosphoenolpyruvate + UDP-N-acetyl-alpha-D-glucosamine = UDP-N-acetyl-3-O-(1-carboxyvinyl)-alpha-D-glucosamine + phosphate. The protein operates within cell wall biogenesis; peptidoglycan biosynthesis. In terms of biological role, cell wall formation. Adds enolpyruvyl to UDP-N-acetylglucosamine. The sequence is that of UDP-N-acetylglucosamine 1-carboxyvinyltransferase from Rhodospirillum centenum (strain ATCC 51521 / SW).